Consider the following 128-residue polypeptide: KRAB domain-containing protein 1 (128 aa).

Positions 15-86 (VAFEDVAVYF…QPQGVLSRND (72 aa)) constitute a KRAB domain.

The sequence is that of KRAB domain-containing protein 1 (KRBOX1) from Homo sapiens (Human).